Reading from the N-terminus, the 417-residue chain is D-amino acid dehydrogenase (417 aa).

3 to 17 (IVVLGGGVVGVTSAW) lines the FAD pocket.

It belongs to the DadA oxidoreductase family. Requires FAD as cofactor.

The catalysed reaction is a D-alpha-amino acid + A + H2O = a 2-oxocarboxylate + AH2 + NH4(+). It functions in the pathway amino-acid degradation; D-alanine degradation; NH(3) and pyruvate from D-alanine: step 1/1. Functionally, oxidative deamination of D-amino acids. The chain is D-amino acid dehydrogenase from Aeromonas hydrophila subsp. hydrophila (strain ATCC 7966 / DSM 30187 / BCRC 13018 / CCUG 14551 / JCM 1027 / KCTC 2358 / NCIMB 9240 / NCTC 8049).